A 757-amino-acid polypeptide reads, in one-letter code: Nitrogen fixation protein FixI (757 aa).

Topologically, residues 1–121 (MSCCASSAAI…GEEEGDDLLK (121 aa)) are cytoplasmic. Positions 37–107 (RQTELSVPNA…AIAERGYQTH (71 aa)) constitute an HMA domain. Residues Cys-48 and Cys-51 each contribute to the a metal cation site. The chain crosses the membrane as a helical span at residues 122 to 143 (QLILAVAVSGFAATNIMLLSVS). Residues 144–158 (VWSGADAATRDLFHW) lie on the Extracellular side of the membrane. A helical transmembrane segment spans residues 159–178 (ISALIAGPALIYAGRFFYKS). Residues 179 to 185 (AWNAIRH) are Cytoplasmic-facing. Residues 186-206 (GRTNMDVPIALAVSLSYGMSL) form a helical membrane-spanning segment. Residues 207–218 (HETIGHGEHAWF) are Extracellular-facing. A helical membrane pass occupies residues 219-239 (DASVTLLFFLLIGRTLDHMMR). Residues 240-368 (GRARTAISGL…RARYRRIADR (129 aa)) lie on the Cytoplasmic side of the membrane. The chain crosses the membrane as a helical span at residues 369–391 (AARYYSPAVHLLALLTFVGWMLV). The Extracellular portion of the chain corresponds to 392–398 (EGDVRHA). The chain crosses the membrane as a helical span at residues 399–416 (MLVAVAVLIITCPCALGL). Residues 417 to 688 (AVPVVQVVAA…ETSRHAGQLI (272 aa)) are Cytoplasmic-facing. The active-site 4-aspartylphosphate intermediate is the Asp-454. Mg(2+) is bound by residues Asp-634 and Asp-638. Residues 689–708 (RQNFALAIGYNVIAVPIAIL) traverse the membrane as a helical segment. The Extracellular portion of the chain corresponds to 709–713 (GYATP). A helical transmembrane segment spans residues 714 to 732 (LVAAVAMSSSSLVVVFNAL). Residues 733–757 (RLKRSLAAGRGATPGTLIHSGAVTS) are Cytoplasmic-facing.

This sequence belongs to the cation transport ATPase (P-type) (TC 3.A.3) family. Type IB subfamily.

The protein localises to the cell membrane. It carries out the reaction ATP + H2O = ADP + phosphate + H(+). In terms of biological role, fixI is a pump of a specific cation involved in symbiotic nitrogen fixation. The four proteins FixG, FixH, FixI, and FixS may participate in a membrane-bound complex coupling the FixI cation pump with a redox process catalyzed by FixG. The protein is Nitrogen fixation protein FixI (fixI) of Rhizobium meliloti (strain 1021) (Ensifer meliloti).